The following is a 544-amino-acid chain: Probable acyl-activating enzyme 8 (544 aa).

This sequence belongs to the ATP-dependent AMP-binding enzyme family. As to expression, expressed at low levels in roots, leaves, stems, flowers and developing seeds.

Its function is as follows. May act as an acid--thiol ligase that activates carboxylic acids by forming acyl-CoAs. The chain is Probable acyl-activating enzyme 8 (AAE8) from Arabidopsis thaliana (Mouse-ear cress).